Here is a 372-residue protein sequence, read N- to C-terminus: DNA polymerase delta subunit 3 (372 aa).

Disordered stretches follow at residues 156-264 (KKAP…NLDS) and 352-372 (KKNTAQSKPQQKSIMSFFGKK). A compositionally biased stretch (polar residues) spans 160–173 (STHSPQLSVPSKTS). A Phosphoserine modification is found at S163. Basic and acidic residues-rich tracts occupy residues 174–190 (TIDKTDTRSTEKTKGKD) and 209–239 (APLENHKEKEPLLPKEEKLSEQAKRERDDLK). Positions 355–365 (TAQSKPQQKSI) are enriched in polar residues.

Heterotetramer that consist of the pol3, cdc1, cdc27 and cdm1 subunits. Cdc27 interacts with cdc1 and is required for dimerization of the tetramer.

It localises to the nucleus. The polypeptide is DNA polymerase delta subunit 3 (cdc27) (Schizosaccharomyces pombe (strain 972 / ATCC 24843) (Fission yeast)).